A 170-amino-acid chain; its full sequence is Translationally-controlled tumor protein homolog (170 aa).

The TCTP domain occupies 1–170 (MLIYNDILNG…WKHGLKETKV (170 aa)).

This sequence belongs to the TCTP family.

It localises to the cytoplasm. The protein resides in the cytoskeleton. Functionally, involved in protein synthesis. Involved in microtubule stabilization. In Gibberella zeae (strain ATCC MYA-4620 / CBS 123657 / FGSC 9075 / NRRL 31084 / PH-1) (Wheat head blight fungus), this protein is Translationally-controlled tumor protein homolog.